The following is a 307-amino-acid chain: Serine/threonine-protein phosphatase PP2A-1 catalytic subunit (307 aa).

Mn(2+) is bound by residues Asp-54, His-56, Asp-82, and Asn-114. His-115 (proton donor) is an active-site residue. Mn(2+)-binding residues include His-164 and His-238. Residues 286–307 (FEPAPRRGAEGEVNRRTPDYFL) form a disordered region. A compositionally biased stretch (basic and acidic residues) spans 289 to 307 (APRRGAEGEVNRRTPDYFL).

It belongs to the PPP phosphatase family. PP-2A subfamily. Mn(2+) is required as a cofactor.

The catalysed reaction is O-phospho-L-seryl-[protein] + H2O = L-seryl-[protein] + phosphate. It catalyses the reaction O-phospho-L-threonyl-[protein] + H2O = L-threonyl-[protein] + phosphate. The chain is Serine/threonine-protein phosphatase PP2A-1 catalytic subunit from Acetabularia peniculus (Green alga).